The primary structure comprises 666 residues: Translation factor guf1, mitochondrial (666 aa).

The transit peptide at 1-43 (MRGCLQLARWLRAAPKCPAASLLKPPSGLANPARFFTTSTACW) directs the protein to the mitochondrion. The tr-type G domain occupies 68–248 (DRYRNFCIVA…TVVEKIPAPV (181 aa)). Residues 77 to 84 (AHVDHGKS), 141 to 145 (DTPGH), and 195 to 198 (NKVD) each bind GTP.

This sequence belongs to the TRAFAC class translation factor GTPase superfamily. Classic translation factor GTPase family. LepA subfamily.

Its subcellular location is the mitochondrion inner membrane. It carries out the reaction GTP + H2O = GDP + phosphate + H(+). Promotes mitochondrial protein synthesis. May act as a fidelity factor of the translation reaction, by catalyzing a one-codon backward translocation of tRNAs on improperly translocated ribosomes. Binds to mitochondrial ribosomes in a GTP-dependent manner. The chain is Translation factor guf1, mitochondrial (guf1) from Aspergillus niger (strain ATCC MYA-4892 / CBS 513.88 / FGSC A1513).